A 394-amino-acid chain; its full sequence is NAD(P)H-quinone oxidoreductase subunit H (394 aa).

The protein belongs to the complex I 49 kDa subunit family. NDH-1 can be composed of about 15 different subunits; different subcomplexes with different compositions have been identified which probably have different functions.

It is found in the cellular thylakoid membrane. The catalysed reaction is a plastoquinone + NADH + (n+1) H(+)(in) = a plastoquinol + NAD(+) + n H(+)(out). It catalyses the reaction a plastoquinone + NADPH + (n+1) H(+)(in) = a plastoquinol + NADP(+) + n H(+)(out). Its function is as follows. NDH-1 shuttles electrons from an unknown electron donor, via FMN and iron-sulfur (Fe-S) centers, to quinones in the respiratory and/or the photosynthetic chain. The immediate electron acceptor for the enzyme in this species is believed to be plastoquinone. Couples the redox reaction to proton translocation, and thus conserves the redox energy in a proton gradient. Cyanobacterial NDH-1 also plays a role in inorganic carbon-concentration. The sequence is that of NAD(P)H-quinone oxidoreductase subunit H from Synechococcus sp. (strain CC9311).